The primary structure comprises 184 residues: UPF0302 protein OB1778 (184 aa).

The protein belongs to the UPF0302 family.

The polypeptide is UPF0302 protein OB1778 (Oceanobacillus iheyensis (strain DSM 14371 / CIP 107618 / JCM 11309 / KCTC 3954 / HTE831)).